We begin with the raw amino-acid sequence, 108 residues long: UPF0145 protein THA_1434 (108 aa).

Belongs to the UPF0145 family.

The chain is UPF0145 protein THA_1434 from Thermosipho africanus (strain TCF52B).